A 380-amino-acid chain; its full sequence is Apolipoprotein A-IV (380 aa).

The first 20 residues, 1–20 (MFLKAVVLSLALVAVTGAEA), serve as a signal peptide directing secretion. A run of 13 repeats spans residues 33–54 (DYFS…KSEL), 60–81 (TLFQ…KKLV), 82–103 (PFAT…EEIR), 115–136 (PHAT…QRLG), 137–158 (PYAE…RQLT), 159–180 (PYVE…ASLA), 181–202 (PYAE…GRLT), 203–224 (PYAD…RSLA), 225–246 (PYAQ…FQMK), 247–268 (KHAE…QGLV), 269–286 (PLVN…EDLQ), 287–308 (KSLA…RTVG), and 309–330 (PYGE…QKLG). A 13 X 22 AA approximate tandem repeats region spans residues 33–330 (DYFSQLGNNA…QLDTLRQKLG (298 aa)). The tract at residues 361-380 (KESQAPALPAQEEMPVPLGG) is disordered.

The protein belongs to the apolipoprotein A1/A4/E family. In terms of assembly, homodimer. In terms of tissue distribution, secreted in plasma.

It localises to the secreted. May have a role in chylomicrons and VLDL secretion and catabolism. Required for efficient activation of lipoprotein lipase by ApoC-II; potent activator of LCAT. Apoa-IV is a major component of HDL and chylomicrons. The protein is Apolipoprotein A-IV (APOA4) of Bos taurus (Bovine).